The chain runs to 964 residues: Protein translocase subunit SecA (964 aa).

ATP-binding positions include Gln-86, 104 to 108 (GEGKT), and Asp-494. The interval 848-964 (AESADTIAVA…YKMCHGQNEK (117 aa)) is disordered. Residues 871–882 (AEGEVEEEDEDT) are compositionally biased toward acidic residues. Positions 889–900 (AESAAASGAGES) are enriched in low complexity. Zn(2+)-binding residues include Cys-947, Cys-949, Cys-958, and His-959.

Belongs to the SecA family. As to quaternary structure, monomer and homodimer. Part of the essential Sec protein translocation apparatus which comprises SecA, SecYEG and auxiliary proteins SecDF. Other proteins may also be involved. Requires Zn(2+) as cofactor.

The protein resides in the cell membrane. It localises to the cytoplasm. The catalysed reaction is ATP + H2O + cellular proteinSide 1 = ADP + phosphate + cellular proteinSide 2.. Its function is as follows. Part of the Sec protein translocase complex. Interacts with the SecYEG preprotein conducting channel. Has a central role in coupling the hydrolysis of ATP to the transfer of proteins into and across the cell membrane, serving as an ATP-driven molecular motor driving the stepwise translocation of polypeptide chains across the membrane. In Bifidobacterium longum (strain NCC 2705), this protein is Protein translocase subunit SecA.